A 1576-amino-acid polypeptide reads, in one-letter code: eIF-2-alpha kinase GCN2 (1576 aa).

Residues 16-127 (NEIEALKAIF…SIVQDYLNDW (112 aa)) form the RWD domain. Residues 180–204 (QDELQRRSYETPQSSSKKKTNSKET) form a disordered region. Protein kinase domains follow at residues 235–511 (VLPL…HVIR) and 556–928 (FEEL…EEFI). ATP-binding positions include 562 to 570 (LGRGGFGEV) and K585. Residues 673–714 (YNSSADEEDPEASDISFQYSNTSDKEGSSDKDSSIEEASSVK) are disordered. The segment covering 695–706 (SDKEGSSDKDSS) has biased composition (basic and acidic residues). The active-site Proton acceptor is the D772.

Belongs to the protein kinase superfamily. Ser/Thr protein kinase family. GCN2 subfamily. As to quaternary structure, homodimer; homodimerization is important for kinase activation by uncharged tRNAs. Interacts (via N-terminal RWD domain) with gcn1 (via N- and C-terminus); this interaction stimulates gcn2 kinase activity in a gcn20-dependent manner in response to amino acid starvation. Interacts (via N-terminus) with the gcn1-gcn20 complex on translating ribosomes in amino acid-starved cells; gcn1 may bind near the ribosomal A-site and promotes the transfer of uncharged tRNAs from the A-site to the tRNA-binding domain in gcn2 for its subsequent kinase activation, and hence allowing fil1 translational activation and derepression of amino acid biosynthetic genes. Post-translationally, autophosphorylated.

It localises to the cytoplasm. It catalyses the reaction L-seryl-[protein] + ATP = O-phospho-L-seryl-[protein] + ADP + H(+). The catalysed reaction is L-threonyl-[protein] + ATP = O-phospho-L-threonyl-[protein] + ADP + H(+). With respect to regulation, the integrated stress response (ISR) is activated in response to conditions that promote ribosome collisions: gcn1, which acts as a ribosome collision sensor, activates gcn2. The RQC pathway and the integrated stress response (ISR) antagonize each other: hel2 prevents the activation of gcn2, while gcn2 suppresses RQC activation. Ribosome stalling-induced integrated stress response prefers ribosomes with empty A sites. The kinase activity is stimulated upon binding to uncharged tRNAs. Functionally, metabolic-stress sensing protein kinase that phosphorylates the alpha subunit of eukaryotic translation initiation factor 2 (eIF-2-alpha/SUI2) on 'Ser-52' in response to low amino acid, carbon, or purine availability. Required for adapatation to nutrient starvation by acting as a key component of the integrated stress response (ISR), by which cells alter their translational and transcriptional output in response to starvation. Converts phosphorylated eIF-2-alpha/SUI2 either to a competitive inhibitor of translation initiation factor eIF-2B, leading to a global protein synthesis repression, and thus to a reduced overall utilization of amino acids, or to a translational initiation activation of specific mRNAs, such as the transcriptional activator GCN4, and hence allowing GCN4-mediated reprogramming of transcription to alleviate nutrient depletion. Binds uncharged tRNAs. This Schizosaccharomyces pombe (strain 972 / ATCC 24843) (Fission yeast) protein is eIF-2-alpha kinase GCN2.